A 583-amino-acid polypeptide reads, in one-letter code: Probable phosphoglucomutase, cytoplasmic 1 (583 aa).

Positions 24 and 123 each coordinate alpha-D-glucose 1,6-bisphosphate. Catalysis depends on S123, which acts as the Phosphoserine intermediate. The Mg(2+) site is built by S123, D299, D301, and D303. A Phosphoserine modification is found at S123. D303, R304, T367, E386, S388, and K399 together coordinate alpha-D-glucose 1,6-bisphosphate.

It belongs to the phosphohexose mutase family. In terms of assembly, monomer. Mg(2+) is required as a cofactor.

It is found in the cytoplasm. It catalyses the reaction alpha-D-glucose 1-phosphate = alpha-D-glucose 6-phosphate. It carries out the reaction O-phospho-L-seryl-[protein] + alpha-D-glucose 1-phosphate = alpha-D-glucose 1,6-bisphosphate + L-seryl-[protein]. The enzyme catalyses alpha-D-glucose 1,6-bisphosphate + L-seryl-[protein] = O-phospho-L-seryl-[protein] + alpha-D-glucose 6-phosphate. Catalyzes the reversible isomerization of alpha-D-glucose 1-phosphate to alpha-D-glucose 6-phosphate. The mechanism proceeds via the intermediate compound alpha-D-glucose 1,6-bisphosphate. This enzyme participates in both the breakdown and synthesis of glucose. In Arabidopsis thaliana (Mouse-ear cress), this protein is Probable phosphoglucomutase, cytoplasmic 1.